Consider the following 468-residue polypeptide: Serine/threonine-protein phosphatase 2A 55 kDa regulatory subunit B beta isoform (468 aa).

WD repeat units lie at residues 47 to 86 (SSADIISTVEFNNTGELLATGDKGGRVVIFQREQENKNQP), 112 to 153 (EIEE…KRPE), 196 to 234 (AHTYHINSISVNSDYETYMSADDLRINLWNLEITNRSFN), 245 to 285 (ELTE…LCDK), 304 to 342 (EIISSISDVKFNHSGRYIMTRDYLTVKVWDLNMENRPIE), 359 to 400 (ENDC…DVTL), and 435 to 468 (DFSKKILHTAWHPSENIIAVAATNNLYIFQDKVN).

This sequence belongs to the phosphatase 2A regulatory subunit B family. As to quaternary structure, PP2A consists of a common heterodimeric core enzyme, composed of a 36 kDa catalytic subunit (subunit C) and a 65 kDa constant regulatory subunit (PR65 or subunit A), that associates with a variety of regulatory subunits.

Its subcellular location is the cytoplasm. It localises to the cytoskeleton. The protein localises to the membrane. Functionally, the B regulatory subunit might modulate substrate selectivity and catalytic activity, and might also direct the localization of the catalytic enzyme to a particular subcellular compartment. Negatively controls the initiation of oocyte maturation. This chain is Serine/threonine-protein phosphatase 2A 55 kDa regulatory subunit B beta isoform (ppp2r2b), found in Xenopus laevis (African clawed frog).